A 77-amino-acid chain; its full sequence is Lantipeptide prochlorosin 4.3 (77 aa).

The propeptide occupies 1 to 64; sequence MSEEQLKAFI…DDELEGVAGG (64 aa). A 2,3-didehydrobutyrine modification is found at Thr-65. The segment at residues 67–70 is a cross-link (lanthionine (Ser-Cys)); it reads SGGC. Residues 72–76 constitute a cross-link (beta-methyllanthionine (Thr-Cys)); that stretch reads TSMFC.

In terms of processing, cross-links are proved in vitro, when coepressed in E.coli with the ProcM lanthionine synthetase. The lanthionine residue has both a DL configuration (with 2S,6R stereochemistry) and a LL configuration (with 2R,6R stereochemistry). DL and LL diastomers have a 4:1 ratio. It is unknown whether nonenzymatic cyclization occur, but authors favor a model in which ProcM does generate all thioether cross-links. The beta-methyllanthionine residue has a DL configuration (with 2S,3S,6R stereochemistry). Post-translationally, maturation of prochlorosin involves the enzymatic conversion of Thr, and Ser into dehydrated AA and the formation of thioether bonds with cysteines. This is followed by membrane translocation and cleavage of the modified precursor.

It is found in the secreted. Functionally, lanthionine-containing peptide (lantipeptide) with unknown function. Does not show antibiotic activity against Lactococcus lactis 117 and Bacillus subtilis 6633 bacteria. Organisms that produce this peptide live in oligotrophic environments at very dilute concentrations, suggesting this peptide is not secreted to influence other bacteria. The polypeptide is Lantipeptide prochlorosin 4.3 (Prochlorococcus marinus (strain MIT 9313)).